A 120-amino-acid chain; its full sequence is Hydrogenase maturation factor HypA (120 aa).

His2 lines the Ni(2+) pocket. Zn(2+) contacts are provided by Cys73, His76, Cys89, and Cys92.

It belongs to the HypA/HybF family.

Involved in the maturation of [NiFe] hydrogenases. Required for nickel insertion into the metal center of the hydrogenase. In Deinococcus radiodurans (strain ATCC 13939 / DSM 20539 / JCM 16871 / CCUG 27074 / LMG 4051 / NBRC 15346 / NCIMB 9279 / VKM B-1422 / R1), this protein is Hydrogenase maturation factor HypA.